Reading from the N-terminus, the 326-residue chain is MKNIAIIGASGYTGAQLTALIHAEAELTIQGLYVSENSLDKGKPLADLYPSYSHIALTLSPLSDDAKAKIVAEADAVVLATEHSVSLHLAAWFYSQGLAVFDLSGAYRFSDVAQYPKWYGFEHEYPEVLAKAVYGLAEWNAKEIAATKMIAVPGCYPTASLTALKPLASLLTSAYPVINAVSGVTGAGRKAQLQTSFCEVSLTPYGVLGHRHQPEIATQLGQEVIFTPHLGNFKRGILATITVQLKPGTTTADVAAAYSVYDQAPLVTVKHNHFPKVDDVVLTPNCHLGWKFDENSGYLVVASAIDNLMKGAASQALQCIKIHFNL.

Residue Cys155 is part of the active site.

It belongs to the NAGSA dehydrogenase family. Type 1 subfamily.

It localises to the cytoplasm. It carries out the reaction N-acetyl-L-glutamate 5-semialdehyde + phosphate + NADP(+) = N-acetyl-L-glutamyl 5-phosphate + NADPH + H(+). It participates in amino-acid biosynthesis; L-arginine biosynthesis; N(2)-acetyl-L-ornithine from L-glutamate: step 3/4. Functionally, catalyzes the NADPH-dependent reduction of N-acetyl-5-glutamyl phosphate to yield N-acetyl-L-glutamate 5-semialdehyde. The polypeptide is N-acetyl-gamma-glutamyl-phosphate reductase (Shewanella baltica (strain OS185)).